The primary structure comprises 217 residues: Ribose-5-phosphate isomerase A (217 aa).

Residues 28–31, 81–84, and 94–97 each bind substrate; these read TGST, DGAD, and KGGG. Catalysis depends on glutamate 103, which acts as the Proton acceptor. Lysine 121 provides a ligand contact to substrate.

This sequence belongs to the ribose 5-phosphate isomerase family. Homodimer.

It catalyses the reaction aldehydo-D-ribose 5-phosphate = D-ribulose 5-phosphate. It functions in the pathway carbohydrate degradation; pentose phosphate pathway; D-ribose 5-phosphate from D-ribulose 5-phosphate (non-oxidative stage): step 1/1. Its function is as follows. Catalyzes the reversible conversion of ribose-5-phosphate to ribulose 5-phosphate. This chain is Ribose-5-phosphate isomerase A, found in Aeromonas salmonicida (strain A449).